Reading from the N-terminus, the 321-residue chain is Degreening-related gene dee76 protein (321 aa).

The protein belongs to the Mo25 family.

The protein is Degreening-related gene dee76 protein (DEE76) of Auxenochlorella protothecoides (Green microalga).